A 196-amino-acid chain; its full sequence is Beta-crystallin A4 (196 aa).

Thr2 carries the N-acetylthreonine modification. An N-terminal arm region spans residues 2-11 (TLQCTKSAGH). Beta/gamma crystallin 'Greek key' domains lie at 12 to 51 (WRMV…KVLS) and 52 to 98 (GAWV…RPVA). The connecting peptide stretch occupies residues 99 to 104 (CANHRD). Beta/gamma crystallin 'Greek key' domains are found at residues 105-146 (SRLT…HVQS) and 147-195 (GAWV…RRIQ).

This sequence belongs to the beta/gamma-crystallin family. As to quaternary structure, homo/heterodimer, or complexes of higher-order. The structure of beta-crystallin oligomers seems to be stabilized through interactions between the N-terminal arms.

Functionally, crystallins are the dominant structural components of the vertebrate eye lens. This Mus musculus (Mouse) protein is Beta-crystallin A4 (Cryba4).